A 603-amino-acid chain; its full sequence is Terpenoid synthase 22 (603 aa).

Residues Asp-356, Asp-360, Asn-500, and Glu-508 each contribute to the Mg(2+) site. The DDXXD motif signature appears at 356–360; that stretch reads DDTCD.

Belongs to the terpene synthase family. Tpsa subfamily. The cofactor is Mg(2+). Mn(2+) is required as a cofactor. In terms of tissue distribution, predominantly expressed in siliques but also in flowers.

It is found in the cytoplasm. It participates in secondary metabolite biosynthesis; terpenoid biosynthesis. In terms of biological role, involved in terpene biosynthesis in roots. Possesses sesquiterpene (C15) synthase activity in vitro. Does not seem to be involved in diterpene (C20) biosynthesis. This Arabidopsis thaliana (Mouse-ear cress) protein is Terpenoid synthase 22.